Consider the following 92-residue polypeptide: Small ribosomal subunit protein uS19 (92 aa).

This sequence belongs to the universal ribosomal protein uS19 family.

Protein S19 forms a complex with S13 that binds strongly to the 16S ribosomal RNA. The polypeptide is Small ribosomal subunit protein uS19 (Bartonella quintana (strain Toulouse) (Rochalimaea quintana)).